We begin with the raw amino-acid sequence, 288 residues long: Thymidylate synthase (288 aa).

Residue R21 coordinates dUMP. H51 contacts (6R)-5,10-methylene-5,6,7,8-tetrahydrofolate. 150 to 151 is a binding site for dUMP; that stretch reads RR. C170 (nucleophile) is an active-site residue. DUMP-binding positions include 190–193, N201, and 231–233; these read RSGD and HIY. D193 is a binding site for (6R)-5,10-methylene-5,6,7,8-tetrahydrofolate. A287 contacts (6R)-5,10-methylene-5,6,7,8-tetrahydrofolate.

Belongs to the thymidylate synthase family. Bacterial-type ThyA subfamily. In terms of assembly, homodimer.

The protein resides in the cytoplasm. The catalysed reaction is dUMP + (6R)-5,10-methylene-5,6,7,8-tetrahydrofolate = 7,8-dihydrofolate + dTMP. Its pathway is pyrimidine metabolism; dTTP biosynthesis. Functionally, catalyzes the reductive methylation of 2'-deoxyuridine-5'-monophosphate (dUMP) to 2'-deoxythymidine-5'-monophosphate (dTMP) while utilizing 5,10-methylenetetrahydrofolate (mTHF) as the methyl donor and reductant in the reaction, yielding dihydrofolate (DHF) as a by-product. This enzymatic reaction provides an intracellular de novo source of dTMP, an essential precursor for DNA biosynthesis. In Mycoplasma mobile (strain ATCC 43663 / 163K / NCTC 11711) (Mesomycoplasma mobile), this protein is Thymidylate synthase.